The following is a 732-amino-acid chain: Polyphosphate kinase (732 aa).

An ATP-binding site is contributed by Asn61. Residues Arg417 and Arg447 each coordinate Mg(2+). His477 functions as the Phosphohistidine intermediate in the catalytic mechanism. Residues Tyr510, Arg606, and His634 each coordinate ATP. The tract at residues 699–718 (DGTYRQRQPAPGEAERGTHS) is disordered.

Belongs to the polyphosphate kinase 1 (PPK1) family. Requires Mg(2+) as cofactor. An intermediate of this reaction is the autophosphorylated ppk in which a phosphate is covalently linked to a histidine residue through a N-P bond.

It carries out the reaction [phosphate](n) + ATP = [phosphate](n+1) + ADP. Catalyzes the reversible transfer of the terminal phosphate of ATP to form a long-chain polyphosphate (polyP). This is Polyphosphate kinase from Thermosynechococcus vestitus (strain NIES-2133 / IAM M-273 / BP-1).